A 108-amino-acid polypeptide reads, in one-letter code: Protein Asterix (108 aa).

Positions 1-29 (MNMTVDPRRKEKINRYKAPKNQGQSGGAN) are disordered. Residues 80–96 (VLSSFMLSVSAVVMSYL) form a helical membrane-spanning segment.

It belongs to the Asterix family.

The protein resides in the membrane. The chain is Protein Asterix from Drosophila melanogaster (Fruit fly).